We begin with the raw amino-acid sequence, 143 residues long: Nucleoside diphosphate kinase (143 aa).

ATP-binding residues include Lys-11, Phe-59, Arg-87, Thr-93, Arg-104, and Asn-114. Catalysis depends on His-117, which acts as the Pros-phosphohistidine intermediate.

The protein belongs to the NDK family. As to quaternary structure, homotetramer. It depends on Mg(2+) as a cofactor.

It localises to the cytoplasm. It catalyses the reaction dZDP + ATP = dZTP + ADP. The catalysed reaction is a 2'-deoxyribonucleoside 5'-diphosphate + ATP = a 2'-deoxyribonucleoside 5'-triphosphate + ADP. The enzyme catalyses a ribonucleoside 5'-diphosphate + ATP = a ribonucleoside 5'-triphosphate + ADP. It participates in purine metabolism. In terms of biological role, major role in the synthesis of nucleoside triphosphates other than ATP. The ATP gamma phosphate is transferred to the NDP beta phosphate via a ping-pong mechanism, using a phosphorylated active-site intermediate. Its function is as follows. (Microbial infection) Catalyzes the phosphorylation of dZDP to dZTP, when the bacterium is infected by a phage that produces the substrate for the synthesis of dZTP (2- amino-2'-deoxyadenosine 5'-triphosphate), which is then used by the phage as a DNA polymerase substrate. The protein is Nucleoside diphosphate kinase of Acinetobacter baumannii (strain AB307-0294).